The following is a 347-amino-acid chain: Phenylalanine--tRNA ligase alpha subunit (347 aa).

Glutamate 261 contributes to the Mg(2+) binding site.

The protein belongs to the class-II aminoacyl-tRNA synthetase family. Phe-tRNA synthetase alpha subunit type 1 subfamily. Tetramer of two alpha and two beta subunits. Mg(2+) serves as cofactor.

The protein resides in the cytoplasm. It catalyses the reaction tRNA(Phe) + L-phenylalanine + ATP = L-phenylalanyl-tRNA(Phe) + AMP + diphosphate + H(+). The polypeptide is Phenylalanine--tRNA ligase alpha subunit (Streptococcus pyogenes serotype M18 (strain MGAS8232)).